The sequence spans 448 residues: Beclin-1 (448 aa).

An N-acetylmethionine modification is found at Met1. Phosphoserine is present on residues Ser14 and Ser29. Positions Thr47–Arg72 are disordered. Phosphoserine; by AMPK occurs at positions 88, 91, and 94. The short motif at Thr106–Ser125 is the BH3 element. The interaction with BCL2 and BCL2L1 isoform Bcl-X(L) stretch occupies residues Leu110–Cys157. Position 117 is a phosphothreonine; by DAPK1 (Thr117). A coiled-coil region spans residues Asp140–Val267. The interval Asp243–Lys448 is evolutionary conserved domain (ECD). Glycyl lysine isopeptide (Lys-Gly) (interchain with G-Cter in ubiquitin) cross-links involve residues Lys400 and Lys435. Residues Trp423–Lys448 form a required for membrane-association region.

Belongs to the beclin family. As to quaternary structure, a homodimeric form is proposed to exist; this metastable form readily transits to ATG14- or UVRAG-containing complexes with BECN1:UVRAG being more stable than BECN1:ATG14. Component of the PI3K (PI3KC3/PI3K-III/class III phosphatidylinositol 3-kinase) complex the core of which is composed of the catalytic subunit PIK3C3, the regulatory subunit PIK3R4 and BECN1 associating with additional regulatory/auxiliary subunits to form alternative complex forms. Alternative complex forms containing a fourth regulatory subunit in a mutually exclusive manner are PI3K complex I (PI3KC3-C1) containing ATG14, and PI3K complex II (PI3KC3-C2) containing UVRAG. PI3KC3-C1 displays a V-shaped architecture with PIK3R4 serving as a bridge between PIK3C3 and the ATG14:BECN1 subcomplex. Both, PI3KC3-C1 and PI3KC3-C2, can associate with further regulatory subunits, such as RUBCN, SH3GLB1/Bif-1 and AMBRA1. PI3KC3-C1 probably associates with PIK3CB. Forms a complex with PPP2CA and AMBRA1; AMBRA1 and BECN1 components of the complex regulate MYC stability via different pathways. Component of the complex, at least composed of LRPPRC, BECN1 and BCL2; the interactions prevent BECN1 from forming an autophagy-inducing complex with PIK3C3. Interacts with AMBRA1, GOPC, GRID2. Interacts with BCL2 and BCL2L1 isoform Bcl-X(L); the interaction inhibits BECN1 function in promoting autophagy by interfering with the formation of the PI3K complex. Interacts with cytosolic HMGB1; inhibits the interaction of BECN1 and BCL2 leading to promotion of autophagy. Interacts with USP10, USP13, DAPK1, RAB39A. Interacts with SLAMF1. Interacts with the poly-Gln domain of ATXN3; the interaction causes deubiquitination at Lys-400 and stabilizes BECN1. Interacts with VMP1. Interacts with TRIM5; the interaction causes activation of BECN1 by causing its dissociation from its inhibitors BCL2 and TAB2. Interacts with active ULK1 (phosphorylated on 'Ser-317') and MEFV simultaneously. Interacts with WDR81 and WDR91; negatively regulates the PI3 kinase/PI3K activity associated with endosomal membranes. Interacts with LAPTM4B; competes with EGFR for LAPTM4B binding; regulates EGFR activity. Interacts with TRIM50. Interacts with TRIM16. Interacts with ATG14; this interaction is increased in the absence of TMEM39A. Interacts with WASHC1; preventing interaction with AMBRA1 and the DCX(AMBRA1) complex and subsequent ubiquitination. Interacts with TRIM17. Interacts with BCL2L10/BCL-B (via BH1 domain). Interacts with SH3BGRL. Interacts with IRGM; enhancing BECN1-interacting partners and influencing the composition of the BECN1 complex. Interacts with ARMC3. Interacts with LRPPRC. Post-translationally, phosphorylation at Thr-117 by DAPK1 reduces its interaction with BCL2 and BCL2L1 and promotes induction of autophagy. In response to autophagic stimuli, phosphorylated at serine residues by AMPK in an ATG14-dependent manner, and this phosphorylation is critical for maximally efficient autophagy. Polyubiquitinated by NEDD4, both with 'Lys-11'- and 'Lys-63'-linkages. 'Lys-11'-linked polyubiquitination leads to degradation and is enhanced when the stabilizing interaction partner VPS34 is depleted. Deubiquitinated by USP10 and USP13, leading to stabilize the PIK3C3/VPS34-containing complexes. Polyubiquitinated at Lys-400 with 'Lys-48'-linkages. 'Lys-48'-linked polyubiquitination of Lys-400 leads to degradation. Deubiquitinated by ATXN3, leading to stabilization. Ubiquitinated at Lys-435 via 'Lys-63'-linkage by the DCX(AMBRA1) complex, thereby increasing the association between BECN1 and PIK3C3 to promote PIK3C3 activity. 'Lys-48'-linked ubiquitination by RNF216 leads to proteasomal degradation and autophagy inhibition. In terms of processing, proteolytically processed by caspases including CASP8 and CASP3; the C-terminal fragments lack autophagy-inducing capacity and are proposed to induce apoptosis. Thus the cleavage is proposed to be an determinant to switch from autophagy to apoptosis pathways affecting cellular homeostasis including viral infections and survival of tumor cells.

It localises to the cytoplasm. It is found in the golgi apparatus. Its subcellular location is the trans-Golgi network membrane. The protein localises to the endosome membrane. The protein resides in the endoplasmic reticulum membrane. It localises to the mitochondrion membrane. It is found in the cytoplasmic vesicle. Its subcellular location is the autophagosome. The protein localises to the mitochondrion. The protein resides in the nucleus. In terms of biological role, plays a central role in autophagy. Acts as a core subunit of the PI3K complex that mediates formation of phosphatidylinositol 3-phosphate; different complex forms are believed to play a role in multiple membrane trafficking pathways: PI3KC3-C1 is involved in initiation of autophagosomes and PI3KC3-C2 in maturation of autophagosomes and endocytosis. Involved in regulation of degradative endocytic trafficking and required for the abscission step in cytokinesis, probably in the context of PI3KC3-C2. Essential for the formation of PI3KC3-C2 but not PI3KC3-C1 PI3K complex forms. Involved in endocytosis. May play a role in antiviral host defense. Its function is as follows. Beclin-1-C 35 kDa localized to mitochondria can promote apoptosis; it induces the mitochondrial translocation of BAX and the release of proapoptotic factors. The polypeptide is Beclin-1 (Becn1) (Rattus norvegicus (Rat)).